Reading from the N-terminus, the 377-residue chain is Ribosomal RNA large subunit methyltransferase G (377 aa).

This sequence belongs to the methyltransferase superfamily. RlmG family.

It localises to the cytoplasm. It catalyses the reaction guanosine(1835) in 23S rRNA + S-adenosyl-L-methionine = N(2)-methylguanosine(1835) in 23S rRNA + S-adenosyl-L-homocysteine + H(+). Functionally, specifically methylates the guanine in position 1835 (m2G1835) of 23S rRNA. The sequence is that of Ribosomal RNA large subunit methyltransferase G from Shewanella sp. (strain ANA-3).